Reading from the N-terminus, the 231-residue chain is Ribosomal RNA small subunit methyltransferase G (231 aa).

S-adenosyl-L-methionine contacts are provided by residues G75, F80, 126-127 (AE), and R142.

The protein belongs to the methyltransferase superfamily. RNA methyltransferase RsmG family.

The protein localises to the cytoplasm. In terms of biological role, specifically methylates the N7 position of a guanine in 16S rRNA. This Mycoplasma capricolum subsp. capricolum (strain California kid / ATCC 27343 / NCTC 10154) protein is Ribosomal RNA small subunit methyltransferase G.